A 135-amino-acid polypeptide reads, in one-letter code: Meiotically up-regulated gene 116 protein (135 aa).

The helical transmembrane segment at 20-39 (YFHSFHCFFLLCFTVMLCVV) threads the bilayer. Positions 81-101 (QTPTKKGNKTKKKRKKEKKKE) are disordered. The span at 86 to 98 (KGNKTKKKRKKEK) shows a compositional bias: basic residues.

The protein resides in the mitochondrion membrane. In terms of biological role, has a role in meiosis. The protein is Meiotically up-regulated gene 116 protein (mug116) of Schizosaccharomyces pombe (strain 972 / ATCC 24843) (Fission yeast).